The sequence spans 439 residues: ATP-dependent RNA helicase RhlB (439 aa).

Residues 9–37 (QKFADLPLHPEVKQALAENGFEFCTPIQA) carry the Q motif motif. The Helicase ATP-binding domain occupies 40-219 (LPVLLQSKDI…YDHMNDPVKV (180 aa)). 53 to 60 (AQTGTGKT) serves as a coordination point for ATP. Positions 165–168 (DEAD) match the DEAD box motif. A Helicase C-terminal domain is found at 243-390 (KIRLLLTLIE…VSNYDRDALL (148 aa)). Residues 395–439 (PPVKIHRKHPAGARNLRERSGAGRPQGAHRSGGRPPRHDRTRRQP) are disordered. Residues 425–439 (SGGRPPRHDRTRRQP) show a composition bias toward basic residues.

This sequence belongs to the DEAD box helicase family. RhlB subfamily. In terms of assembly, component of the RNA degradosome, which is a multiprotein complex involved in RNA processing and mRNA degradation.

It is found in the cytoplasm. The enzyme catalyses ATP + H2O = ADP + phosphate + H(+). In terms of biological role, DEAD-box RNA helicase involved in RNA degradation. Has RNA-dependent ATPase activity and unwinds double-stranded RNA. The protein is ATP-dependent RNA helicase RhlB of Shewanella sp. (strain MR-4).